The primary structure comprises 397 residues: 1-deoxy-D-xylulose 5-phosphate reductoisomerase (397 aa).

The NADPH site is built by Thr17, Gly18, Ser19, Ile20, Asn47, and Asn130. Lys131 serves as a coordination point for 1-deoxy-D-xylulose 5-phosphate. Residue Glu132 participates in NADPH binding. Asp156 provides a ligand contact to Mn(2+). Positions 157, 158, 182, and 205 each coordinate 1-deoxy-D-xylulose 5-phosphate. Residue Glu158 coordinates Mn(2+). Residue Gly211 participates in NADPH binding. 1-deoxy-D-xylulose 5-phosphate is bound by residues Ser218, Asn223, Lys224, and Glu227. Residue Glu227 participates in Mn(2+) binding.

This sequence belongs to the DXR family. The cofactor is Mg(2+). Mn(2+) is required as a cofactor.

It catalyses the reaction 2-C-methyl-D-erythritol 4-phosphate + NADP(+) = 1-deoxy-D-xylulose 5-phosphate + NADPH + H(+). It participates in isoprenoid biosynthesis; isopentenyl diphosphate biosynthesis via DXP pathway; isopentenyl diphosphate from 1-deoxy-D-xylulose 5-phosphate: step 1/6. Its function is as follows. Catalyzes the NADPH-dependent rearrangement and reduction of 1-deoxy-D-xylulose-5-phosphate (DXP) to 2-C-methyl-D-erythritol 4-phosphate (MEP). The polypeptide is 1-deoxy-D-xylulose 5-phosphate reductoisomerase (Rhizobium rhizogenes (strain K84 / ATCC BAA-868) (Agrobacterium radiobacter)).